A 179-amino-acid polypeptide reads, in one-letter code: MSQKLKTTYQETIVPKLKEQFGYTNIHQVPKVIKITVNRGLGEASQNAKALESSKAELSTITGQQPVVTRAKKAIAGFKIREGMPVGVMVTLRGDRMYAFLDRLINLALPRIRDFRGISGNSFDGRGNYSLGIREQLIFPEIEYDKIDQIRGMDISIITTAKNDEEGRALLKEMGMPFR.

This sequence belongs to the universal ribosomal protein uL5 family. Part of the 50S ribosomal subunit; part of the 5S rRNA/L5/L18/L25 subcomplex. Contacts the 5S rRNA and the P site tRNA. Forms a bridge to the 30S subunit in the 70S ribosome.

Functionally, this is one of the proteins that bind and probably mediate the attachment of the 5S RNA into the large ribosomal subunit, where it forms part of the central protuberance. In the 70S ribosome it contacts protein S13 of the 30S subunit (bridge B1b), connecting the 2 subunits; this bridge is implicated in subunit movement. Contacts the P site tRNA; the 5S rRNA and some of its associated proteins might help stabilize positioning of ribosome-bound tRNAs. The protein is Large ribosomal subunit protein uL5 of Microcystis aeruginosa (strain NIES-843 / IAM M-2473).